We begin with the raw amino-acid sequence, 322 residues long: CRISPR-associated protein Cas1 1 (322 aa).

Positions 149, 214, and 229 each coordinate Mn(2+).

Belongs to the CRISPR-associated endonuclease Cas1 family. In terms of assembly, homodimer, forms a heterotetramer with a Cas2 homodimer. It depends on Mg(2+) as a cofactor. Mn(2+) serves as cofactor.

Functionally, CRISPR (clustered regularly interspaced short palindromic repeat), is an adaptive immune system that provides protection against mobile genetic elements (viruses, transposable elements and conjugative plasmids). CRISPR clusters contain spacers, sequences complementary to antecedent mobile elements, and target invading nucleic acids. CRISPR clusters are transcribed and processed into CRISPR RNA (crRNA). Acts as a dsDNA endonuclease. Involved in the integration of spacer DNA into the CRISPR cassette. The protein is CRISPR-associated protein Cas1 1 of Methanobrevibacter ruminantium (strain ATCC 35063 / DSM 1093 / JCM 13430 / OCM 146 / M1) (Methanobacterium ruminantium).